Consider the following 607-residue polypeptide: Homologous recombination OB-fold protein (607 aa).

4 disordered regions span residues 25 to 49, 84 to 108, 196 to 308, and 531 to 581; these read LRPNSSRPQETPQAHSSKLSPSYPA, ISSSSSGSQQRMTGTKVSQESSGRQ, PWPS…TTVT, and LKPP…DDLD. Polar residues-rich tracts occupy residues 27 to 49 and 92 to 108; these read PNSSRPQETPQAHSSKLSPSYPA and QQRMTGTKVSQESSGRQ. Ser-30 is modified (phosphoserine). Arg-281 bears the Asymmetric dimethylarginine mark. The segment covering 295 to 308 has biased composition (low complexity); sequence SPFSTPRSTSTTVT. Acidic residues predominate over residues 570–581; it reads PEEELPEADDLD.

Interacts with MCM8; this interaction is necessary for MCM8-MCM9 helicase complex recruitment to DNA damage sites. Interacts with RPA1; this interaction associates HROB with the RPA complex.

The protein localises to the nucleus. It localises to the chromosome. DNA-binding protein involved in homologous recombination that acts by recruiting the MCM8-MCM9 helicase complex to sites of DNA damage to promote DNA repair synthesis. This chain is Homologous recombination OB-fold protein, found in Rattus norvegicus (Rat).